A 749-amino-acid polypeptide reads, in one-letter code: Sentrin-specific protease 5 (749 aa).

Basic and acidic residues predominate over residues 268 to 279 (TGDHQENLRDNN). 2 disordered regions span residues 268–288 (TGDH…CNPV) and 394–440 (QESG…EEDG). The segment at 557 to 718 (FYNKHMLDMD…VFVLQYCKCL (162 aa)) is protease. Catalysis depends on residues His640, Asp657, and Cys707.

Belongs to the peptidase C48 family. As to quaternary structure, interacts with CCAR2.

It localises to the nucleus. Its subcellular location is the nucleolus. In terms of biological role, protease that catalyzes two essential functions in the SUMO pathway: processing of full-length SUMO3 to its mature form and deconjugation of SUMO2 and SUMO3 from targeted proteins. Has weak proteolytic activity against full-length SUMO1 or SUMO1 conjugates. Required for cell division. The sequence is that of Sentrin-specific protease 5 (Senp5) from Mus musculus (Mouse).